We begin with the raw amino-acid sequence, 171 residues long: MFSKLFTTSCLVAIALTTAQEEVSGKVSSTKRRQYVAAQQPAVPVVAPVGQCPGGPSLPIECDPKRPWPQCPPQSYCYATNSVDIGPYFCCPVWSTYGAAWRPATPFYNYVPPVPANWPDVAKMTANWPAAAVSVPVKARKPTKSDDEEEEVGKMGGISSSINSWVQRQKL.

Residues 139–171 (ARKPTKSDDEEEEVGKMGGISSSINSWVQRQKL) are disordered. The span at 158 to 171 (ISSSINSWVQRQKL) shows a compositional bias: polar residues.

This is an uncharacterized protein from Caenorhabditis elegans.